The chain runs to 157 residues: UPF0254 protein MTH_1148 (157 aa).

This sequence belongs to the UPF0254 family.

This is UPF0254 protein MTH_1148 from Methanothermobacter thermautotrophicus (strain ATCC 29096 / DSM 1053 / JCM 10044 / NBRC 100330 / Delta H) (Methanobacterium thermoautotrophicum).